A 341-amino-acid chain; its full sequence is HTH-type transcriptional repressor PurR (341 aa).

The 55-residue stretch at 2-56 folds into the HTH lacI-type domain; the sequence is ATIKDVAKRANVSTTTVSHVINKTRFVAEETRNAVWAAIKELHYSPSAVARSLKV. A DNA-binding region (H-T-H motif) is located at residues 4-23; it reads IKDVAKRANVSTTTVSHVIN. A DNA-binding region spans residues 48 to 56; sequence SAVARSLKV. Residues Tyr-73, Arg-190, Thr-192, Phe-221, and Asp-275 each coordinate hypoxanthine.

Homodimer.

It participates in purine metabolism; purine nucleotide biosynthesis [regulation]. Is the main repressor of the genes involved in the de novo synthesis of purine nucleotides, regulating purB, purC, purEK, purF, purHD, purL, purMN and guaBA expression. PurR is allosterically activated to bind its cognate DNA by binding the purine corepressors, hypoxanthine or guanine, thereby effecting transcription repression. The chain is HTH-type transcriptional repressor PurR from Salmonella arizonae (strain ATCC BAA-731 / CDC346-86 / RSK2980).